We begin with the raw amino-acid sequence, 297 residues long: tRNA(Ile)-lysidine synthase (297 aa).

Ser16–Ser21 is a binding site for ATP.

Belongs to the tRNA(Ile)-lysidine synthase family.

The protein resides in the cytoplasm. It catalyses the reaction cytidine(34) in tRNA(Ile2) + L-lysine + ATP = lysidine(34) in tRNA(Ile2) + AMP + diphosphate + H(+). Its function is as follows. Ligates lysine onto the cytidine present at position 34 of the AUA codon-specific tRNA(Ile) that contains the anticodon CAU, in an ATP-dependent manner. Cytidine is converted to lysidine, thus changing the amino acid specificity of the tRNA from methionine to isoleucine. The protein is tRNA(Ile)-lysidine synthase of Mesomycoplasma hyopneumoniae (strain 232) (Mycoplasma hyopneumoniae).